Consider the following 126-residue polypeptide: UPF0292 protein TSIB_0423 (126 aa).

Residues 20-100 (NGVILVEGMR…RVDTNTRREL (81 aa)) form the Toprim domain. The Mg(2+) site is built by Glu26, Asp69, and Asp71.

It belongs to the UPF0292 family. The cofactor is Mg(2+).

The sequence is that of UPF0292 protein TSIB_0423 from Thermococcus sibiricus (strain DSM 12597 / MM 739).